An 842-amino-acid chain; its full sequence is Protein translocase subunit SecA (842 aa).

Residues Gln91, 109 to 113, and Asp498 contribute to the ATP site; that span reads GEGKT. Over residues 798 to 824 the composition is skewed to basic and acidic residues; that stretch reads QGQHVSAEDGKEKVKPQPVVKDNHIGR. The interval 798-827 is disordered; the sequence is QGQHVSAEDGKEKVKPQPVVKDNHIGRNDP. 4 residues coordinate Zn(2+): Cys828, Cys830, Cys839, and Cys840.

This sequence belongs to the SecA family. Monomer and homodimer. Part of the essential Sec protein translocation apparatus which comprises SecA, SecYEG and auxiliary proteins SecDF. Other proteins may also be involved. Zn(2+) is required as a cofactor.

The protein localises to the cell membrane. Its subcellular location is the cytoplasm. It carries out the reaction ATP + H2O + cellular proteinSide 1 = ADP + phosphate + cellular proteinSide 2.. Its function is as follows. Part of the Sec protein translocase complex. Interacts with the SecYEG preprotein conducting channel. Has a central role in coupling the hydrolysis of ATP to the transfer of proteins into and across the cell membrane, serving as an ATP-driven molecular motor driving the stepwise translocation of polypeptide chains across the membrane. This chain is Protein translocase subunit SecA, found in Staphylococcus carnosus (strain TM300).